The primary structure comprises 159 residues: Sumo-conjugating enzyme ubc9 (159 aa).

The region spanning 4–157 (ISSARLSEER…VKAQSKVYPP (154 aa)) is the UBC core domain. Residue Cys93 is the Glycyl thioester intermediate of the active site.

It belongs to the ubiquitin-conjugating enzyme family.

The protein localises to the nucleus. The protein operates within protein modification; protein sumoylation. Accepts the ubiquitin-like protein sumo from the E1 complex and catalyzes its covalent attachment to other proteins with the help of an E3 ligase. The polypeptide is Sumo-conjugating enzyme ubc9 (ubc9) (Dictyostelium discoideum (Social amoeba)).